A 316-amino-acid polypeptide reads, in one-letter code: Ribosomal RNA small subunit methyltransferase H (316 aa).

Residues 35-37, Asp55, Phe79, Asp101, and Gln108 contribute to the S-adenosyl-L-methionine site; that span reads GGH. Positions 291-316 are disordered; sequence ALKPSDQEVELNPRSRSSVLRVAEKL.

This sequence belongs to the methyltransferase superfamily. RsmH family.

Its subcellular location is the cytoplasm. The enzyme catalyses cytidine(1402) in 16S rRNA + S-adenosyl-L-methionine = N(4)-methylcytidine(1402) in 16S rRNA + S-adenosyl-L-homocysteine + H(+). Its function is as follows. Specifically methylates the N4 position of cytidine in position 1402 (C1402) of 16S rRNA. This chain is Ribosomal RNA small subunit methyltransferase H, found in Vibrio cholerae serotype O1 (strain ATCC 39315 / El Tor Inaba N16961).